Here is a 174-residue protein sequence, read N- to C-terminus: MTQPLFLIGPRGCGKTTVGMALADSLNRRFVDTDQWLQSQLNMTVAEIVEREEWTGFRARETAALEAVTAPSTVIATGGGIILTEFNRHFMQNNGIVVYLCAPVSVLVNRLQAAPEEDLRPTLTGKPLSEEVQEVLEERDALYREVAHIIIDATNEPSQVISEIRSALAQTINC.

12–17 (GCGKTT) provides a ligand contact to ATP. Residues Thr-16 and Asp-32 each contribute to the Mg(2+) site. Substrate contacts are provided by Asp-34, Arg-58, and Gly-79. Positions 112-126 (QAAPEEDLRPTLTGK) are LID domain. Arg-120 contributes to the ATP binding site. A substrate-binding site is contributed by Arg-139.

It belongs to the shikimate kinase family. AroL subfamily. In terms of assembly, monomer. The cofactor is Mg(2+).

It is found in the cytoplasm. It carries out the reaction shikimate + ATP = 3-phosphoshikimate + ADP + H(+). It functions in the pathway metabolic intermediate biosynthesis; chorismate biosynthesis; chorismate from D-erythrose 4-phosphate and phosphoenolpyruvate: step 5/7. Catalyzes the specific phosphorylation of the 3-hydroxyl group of shikimic acid using ATP as a cosubstrate. This is Shikimate kinase 2 from Escherichia coli O7:K1 (strain IAI39 / ExPEC).